Here is a 254-residue protein sequence, read N- to C-terminus: Small ribosomal subunit protein uS2 (254 aa).

It belongs to the universal ribosomal protein uS2 family.

The sequence is that of Small ribosomal subunit protein uS2 from Brucella ovis (strain ATCC 25840 / 63/290 / NCTC 10512).